The chain runs to 415 residues: von Willebrand factor A domain-containing protein 1 (415 aa).

The signal sequence occupies residues 1–18 (MLFWTVLSMALSLRLALA). The VWFA domain maps to 34–213 (DLLFLLDSSA…ELRGAIIDAM (180 aa)). Phosphoserine occurs at positions 74, 80, and 93. 2 consecutive Fibronectin type-III domains span residues 214 to 305 (QPHQ…LQEE) and 307 to 405 (GPER…VPQA). Asparagine 264 carries N-linked (GlcNAc...) asparagine glycosylation. An intrachain disulfide couples cysteine 369 to cysteine 393.

Homodimer or homomultimer; disulfide-linked. Interacts with HSPG2. Post-translationally, N-glycosylated.

It localises to the secreted. The protein resides in the extracellular space. The protein localises to the extracellular matrix. It is found in the basement membrane. In terms of biological role, promotes matrix assembly. Involved in the organization of skeletal muscles and in the formation of neuromuscular junctions. This is von Willebrand factor A domain-containing protein 1 (Vwa1) from Rattus norvegicus (Rat).